We begin with the raw amino-acid sequence, 340 residues long: Anthranilate phosphoribosyltransferase (340 aa).

5-phospho-alpha-D-ribose 1-diphosphate is bound by residues Gly80, 83–84 (GD), Thr88, 90–93 (NIST), 108–116 (KHGNRAMSS), and Ser120. Position 80 (Gly80) interacts with anthranilate. Residue Ser92 participates in Mg(2+) binding. An anthranilate-binding site is contributed by Asn111. Arg166 lines the anthranilate pocket. Mg(2+) is bound by residues Asp225 and Glu226.

It belongs to the anthranilate phosphoribosyltransferase family. In terms of assembly, homodimer. Requires Mg(2+) as cofactor.

It catalyses the reaction N-(5-phospho-beta-D-ribosyl)anthranilate + diphosphate = 5-phospho-alpha-D-ribose 1-diphosphate + anthranilate. It functions in the pathway amino-acid biosynthesis; L-tryptophan biosynthesis; L-tryptophan from chorismate: step 2/5. In terms of biological role, catalyzes the transfer of the phosphoribosyl group of 5-phosphorylribose-1-pyrophosphate (PRPP) to anthranilate to yield N-(5'-phosphoribosyl)-anthranilate (PRA). The protein is Anthranilate phosphoribosyltransferase of Roseiflexus castenholzii (strain DSM 13941 / HLO8).